The chain runs to 412 residues: MQTWSSPSVPKLRGAPRPLRLHDTATGEVRPTAPGDTARLYVCGITPYDATHLGHAATYLAFDLVQRVWLDNGHDVHYVQNVTDVDDPLLERAARDQDDWVVLAMRETALFREDMEALRVLAPREYVGAVESIPGIVDMIEKLLASGAAYRLDDDEYPDVYFPHDATPNFGYESNYDRETMLRLFAERGGDPDRPGKRDPLDALLWRMARPGEPSWETSIGTGRPGWHIECSHIALANLDTPFDLQGGGSDLVFPHHEYSAAHAEALTGQHPFARHYAHAGMIGLDGEKMSKSRGNLVFVSKLRSTGVDPGVIRLALFAGHYREDRPWTDELFAEAGTRLALWRSAADLESGPSVDDVVARVREHLGNDLDTPKALAALDAWAREAWDRGGPDTEAPGVFRTAVDALLGIAL.

The interval 1–30 is disordered; it reads MQTWSSPSVPKLRGAPRPLRLHDTATGEVR. Residue Cys-43 coordinates Zn(2+). Residues 43–46, Thr-58, and 81–83 contribute to the L-cysteinyl-5'-AMP site; these read CGIT and NVT. The short motif at 45–55 is the 'HIGH' region element; sequence ITPYDATHLGH. Positions 187-192 match the 'ERGGDP' region motif; it reads ERGGDP. Trp-227 contributes to the L-cysteinyl-5'-AMP binding site. Zn(2+) is bound at residue Cys-231. Residue 249 to 251 participates in L-cysteinyl-5'-AMP binding; that stretch reads GSD. His-256 serves as a coordination point for Zn(2+). Position 283 (Ile-283) interacts with L-cysteinyl-5'-AMP. Positions 289-293 match the 'KMSKS' region motif; that stretch reads KMSKS.

It belongs to the class-I aminoacyl-tRNA synthetase family. MshC subfamily. In terms of assembly, monomer. Requires Zn(2+) as cofactor.

The enzyme catalyses 1D-myo-inositol 2-amino-2-deoxy-alpha-D-glucopyranoside + L-cysteine + ATP = 1D-myo-inositol 2-(L-cysteinylamino)-2-deoxy-alpha-D-glucopyranoside + AMP + diphosphate + H(+). Functionally, catalyzes the ATP-dependent condensation of GlcN-Ins and L-cysteine to form L-Cys-GlcN-Ins. This chain is L-cysteine:1D-myo-inositol 2-amino-2-deoxy-alpha-D-glucopyranoside ligase, found in Actinosynnema mirum (strain ATCC 29888 / DSM 43827 / JCM 3225 / NBRC 14064 / NCIMB 13271 / NRRL B-12336 / IMRU 3971 / 101).